Consider the following 94-residue polypeptide: Putative regulatory protein Sfum_3631 (94 aa).

The protein belongs to the RemA family.

The protein is Putative regulatory protein Sfum_3631 of Syntrophobacter fumaroxidans (strain DSM 10017 / MPOB).